Consider the following 225-residue polypeptide: ATP-dependent Clp protease proteolytic subunit (225 aa).

S101 functions as the Nucleophile in the catalytic mechanism. H126 is an active-site residue.

Belongs to the peptidase S14 family. Component of the chloroplastic Clp protease core complex.

The protein localises to the plastid. Its subcellular location is the chloroplast stroma. The catalysed reaction is Hydrolysis of proteins to small peptides in the presence of ATP and magnesium. alpha-casein is the usual test substrate. In the absence of ATP, only oligopeptides shorter than five residues are hydrolyzed (such as succinyl-Leu-Tyr-|-NHMec, and Leu-Tyr-Leu-|-Tyr-Trp, in which cleavage of the -Tyr-|-Leu- and -Tyr-|-Trp bonds also occurs).. Its function is as follows. Cleaves peptides in various proteins in a process that requires ATP hydrolysis. Has a chymotrypsin-like activity. Plays a major role in the degradation of misfolded proteins. In Chlorokybus atmophyticus (Soil alga), this protein is ATP-dependent Clp protease proteolytic subunit.